The chain runs to 388 residues: MIRETLTTELAALKKQGLQRQRRTLQTPCGVRIEVDGRSLLSFCSNDYLGLAAEPTLIDAAREAALRWGVGSGSSHLVSGHFTPHEELEHKLASFVGGERALYFSTGYMANLGVVPALVGRGDAVFADKLNHASLIDAVQLSRADHQRYPHGDLTALERQLSASKAKRKLILTDAVFSMDGDLAPLTQLLELAERYDAWLMVDDAHGFGILGPQGRGTLVQYGIVLAEHPRLLYMGTLGKAAGVSGAFIAGAEEVIEWLLQRARTYIFTTASSPMLAATLLKSLDLIAGADGDARRSQLQLLIARLQDGLQGSRWQLLPSPTAIQAIIIGENDAALRVAAALAEQGLWVPAIRPPTVPKGTARLRITLSAAHSLADVDRLLAALQAAQ.

Arg20 lines the substrate pocket. 107 to 108 contacts pyridoxal 5'-phosphate; it reads GY. His132 contributes to the substrate binding site. Residues Ser178, His206, and Thr237 each coordinate pyridoxal 5'-phosphate. Lys240 is subject to N6-(pyridoxal phosphate)lysine. Thr356 contacts substrate.

It belongs to the class-II pyridoxal-phosphate-dependent aminotransferase family. BioF subfamily. In terms of assembly, homodimer. The cofactor is pyridoxal 5'-phosphate.

It catalyses the reaction 6-carboxyhexanoyl-[ACP] + L-alanine + H(+) = (8S)-8-amino-7-oxononanoate + holo-[ACP] + CO2. Its pathway is cofactor biosynthesis; biotin biosynthesis. Its function is as follows. Catalyzes the decarboxylative condensation of pimeloyl-[acyl-carrier protein] and L-alanine to produce 8-amino-7-oxononanoate (AON), [acyl-carrier protein], and carbon dioxide. The protein is 8-amino-7-oxononanoate synthase of Herminiimonas arsenicoxydans.